The following is a 98-amino-acid chain: MMCGAPSATQPATAETQHIADQVRSQLEEKENKKFPVFKAVSFKSQVVAGTNYFIKVHVGDEEFVHLRVFQSLPHENKPLTLSNYQTNKAKHDELTYF.

At M1 the chain carries N-acetylmethionine. The Secondary area of contact signature appears at 46–50 (QVVAG).

Belongs to the cystatin family. Able to form dimers stabilized by noncovalent forces.

The protein localises to the cytoplasm. It localises to the nucleus. In terms of biological role, this is an intracellular thiol proteinase inhibitor. Tightly binding reversible inhibitor of cathepsins L, H and B. The polypeptide is Cystatin-B (CSTB) (Pan troglodytes (Chimpanzee)).